The sequence spans 469 residues: Neuraminidase (469 aa).

Residues 1 to 6 (MNPNQK) lie on the Intravirion side of the membrane. The chain crosses the membrane as a helical span at residues 7 to 27 (IITIGSICMVVGIISLILQIG). The segment at 11–33 (GSICMVVGIISLILQIGNIVSIW) is involved in apical transport and lipid raft association. At 28 to 469 (NIVSIWISHS…DAELPLNIDK (442 aa)) the chain is on the virion surface side. The interval 36–90 (HSIQTGNQNHTGTCDQSIITYKNSTWVNQTYVNISNTNVVAGKDTTSVILAGNSS) is hypervariable stalk region. Residues N44, N58, N63, N68, and N88 are each glycosylated (N-linked (GlcNAc...) asparagine; by host). The tract at residues 91–469 (LCPIRGWAIY…DAELPLNIDK (379 aa)) is head of neuraminidase. Cystine bridges form between C92–C417, C124–C129, C184–C231, C233–C238, C279–C292, C281–C290, C318–C335, and C421–C446. R118 lines the substrate pocket. An N-linked (GlcNAc...) asparagine; by host glycan is attached at N146. D151 serves as the catalytic Proton donor/acceptor. Residue R152 coordinates substrate. The N-linked (GlcNAc...) asparagine; by host glycan is linked to N235. Residue 277-278 (EE) participates in substrate binding. R293 provides a ligand contact to substrate. Ca(2+) contacts are provided by D294, G298, and D324. N365 carries an N-linked (GlcNAc...) asparagine; by host glycan. R368 contacts substrate. The active-site Nucleophile is Y402.

Belongs to the glycosyl hydrolase 34 family. As to quaternary structure, homotetramer. Ca(2+) serves as cofactor. In terms of processing, N-glycosylated.

It is found in the virion membrane. It localises to the host apical cell membrane. The catalysed reaction is Hydrolysis of alpha-(2-&gt;3)-, alpha-(2-&gt;6)-, alpha-(2-&gt;8)- glycosidic linkages of terminal sialic acid residues in oligosaccharides, glycoproteins, glycolipids, colominic acid and synthetic substrates.. Inhibited by the neuraminidase inhibitors zanamivir (Relenza) and oseltamivir (Tamiflu). These drugs interfere with the release of progeny virus from infected cells and are effective against all influenza strains. Resistance to neuraminidase inhibitors is quite rare. Its function is as follows. Catalyzes the removal of terminal sialic acid residues from viral and cellular glycoconjugates. Cleaves off the terminal sialic acids on the glycosylated HA during virus budding to facilitate virus release. Additionally helps virus spread through the circulation by further removing sialic acids from the cell surface. These cleavages prevent self-aggregation and ensure the efficient spread of the progeny virus from cell to cell. Otherwise, infection would be limited to one round of replication. Described as a receptor-destroying enzyme because it cleaves a terminal sialic acid from the cellular receptors. May facilitate viral invasion of the upper airways by cleaving the sialic acid moieties on the mucin of the airway epithelial cells. Likely to plays a role in the budding process through its association with lipid rafts during intracellular transport. May additionally display a raft-association independent effect on budding. Plays a role in the determination of host range restriction on replication and virulence. Sialidase activity in late endosome/lysosome traffic seems to enhance virus replication. This chain is Neuraminidase, found in Influenza A virus (strain A/Fort Monmouth/1/1947 H1N1).